Consider the following 75-residue polypeptide: Phytosulfokines 3 (75 aa).

Residues 1-22 form the signal peptide; the sequence is MSPKVIAICLVALLLPISISHG. The propeptide occupies 23-66; the sequence is GRIGPIEPSKASSKVVERGNYDGRVEGCEEDDCLVERLLVAHLD. 2 positions are modified to sulfotyrosine: Y67 and Y69. Residues 72 to 75 constitute a propeptide that is removed on maturation; that stretch reads GKHN.

This sequence belongs to the phytosulfokine family. Post-translationally, sulfation is important for activity and for the binding to a putative membrane receptor. PSK-alpha is produced by endopeptidase digestion. PSK-beta is produced from PSK-alpha by exopeptidase digestion.

It localises to the secreted. Its function is as follows. Promotes plant cell differentiation, organogenesis and somatic embryogenesis as well as cell proliferation. This chain is Phytosulfokines 3 (PSK3), found in Oryza sativa subsp. japonica (Rice).